Here is a 454-residue protein sequence, read N- to C-terminus: GA-binding protein alpha chain (454 aa).

The PNT domain occupies 168–251; that stretch reads AALEGYRKEQ…SHLELLRKYV (84 aa). Positions 297 to 316 are disordered; that stretch reads QRAPRISGEDRSSPGNRTGN. At S303 the chain carries Phosphoserine. A DNA-binding region (ETS) is located at residues 320–400; sequence IQLWQFLLEL…QGKRFVYKFV (81 aa).

This sequence belongs to the ETS family. Heterotetramer of two alpha and two beta subunits.

It is found in the nucleus. Its function is as follows. Transcription factor capable of interacting with purine rich repeats (GA repeats). Positively regulates transcription of transcriptional repressor RHIT/ZNF205. In terms of biological role, (Microbial infection) Necessary for the expression of the Adenovirus E4 gene. In Homo sapiens (Human), this protein is GA-binding protein alpha chain (GABPA).